Reading from the N-terminus, the 800-residue chain is MSLVYLLIAILVIMAMILLMSKRRALAKYAGYIALVAPVISSIYFLIQIPSVAKLQYLSTSIPWIKTLDINLDLRLDGLSLMFSLIISLIGIAVFFYATQYLSSRKDNLPRFYFYLTLFMFSMIGIVLSDNTILMYIFWELTSVSSFLLISYWYNNGDSQFGAIQSFMITVFGGLALLVGFIMLYIMTGTNNITEILGQADHIKNHGLFIPMIFMFLLGAFTKSAQFPFHIWLPRAMAAPTPVSAYLHSATMVKAGIFLLLRFTPLLGLSNMYVYIVTFVGLITMLFGSITALKQWDLKGILAYSTISQLGMIMAMVGIGGGYAQHQQDAIASIYVFVLFGALFHLMNHAIFKCALFMGVGILDHEAGSRDIRILSGMRQLFPKMNLVMTIAALSMAGVPFLNGFLSKEMFLDALTQTGQLSQFSLISMIAIVFVGVIASVFTFTYALYMVKEVFWTKYDSKVFTKKNIHEPWLFSLPSLILMVLVPVIFFVPNIFGKGIIVLALRAVSGGNHQIDQLAPHVSQWHGFNIPLLLTIIIILLGSVLAIKVDWKKVFTGKIRQISVSKSYEMVYRHFEKFATKRFKRVMQDRLNQYIIMTLGIFMIIIGYGYIRIGLPKVHQLHVSEFGALEIILAIVTVTIGISLIFIRQRLTMVILNGVIGFVVTLFFIAMKAPDLALTQLVVETITTILFIVSFSRLPNVPRSNANKKREIIKISVSLLMALIVVSLIFITQQTDGLSSISDFYLKADKLTGGKNIVNAILGDFRALDTLFEGLVLIITGLGIYTLLNYQDRRGQDERE.

20 consecutive transmembrane segments (helical) span residues M1–S21, I33–A53, G78–A98, L118–F138, F167–M187, G207–F227, T241–L261, Y273–L293, G300–G320, I331–I351, L387–S407, F424–F444, P472–V492, G527–I547, I595–L615, G627–I647, L651–M671, L676–S696, I712–T732, and L768–L788.

Belongs to the CPA3 antiporters (TC 2.A.63) subunit A family. As to quaternary structure, may form a heterooligomeric complex that consists of seven subunits: mnhA2, mnhB2, mnhC2, mnhD2, mnhE2, mnhF2 and mnhG2.

It localises to the cell membrane. The polypeptide is Putative antiporter subunit mnhA2 (mnhA2) (Staphylococcus aureus (strain USA300)).